We begin with the raw amino-acid sequence, 55 residues long: Transcriptional regulator CdrS (55 aa).

It belongs to the CdrS family.

The protein localises to the cytoplasm. Functionally, transcriptional regulator which plays a central role in the regulation of cell division. Activates the expression of the gene encoding the cell division protein FtsZ2, and of other genes encoding proteins predicted to function in critical aspects of cell division. Required for normal cell division but not for cell elongation. May act during the transition from stasis to growth. The CdrSL-FtsZ2 transcriptional network might coordinate cell division timing with cell growth. In Halobacterium salinarum (strain ATCC 700922 / JCM 11081 / NRC-1) (Halobacterium halobium), this protein is Transcriptional regulator CdrS.